The chain runs to 62 residues: Large ribosomal subunit protein uL29 (62 aa).

This sequence belongs to the universal ribosomal protein uL29 family.

The protein is Large ribosomal subunit protein uL29 of Geobacter metallireducens (strain ATCC 53774 / DSM 7210 / GS-15).